Here is a 446-residue protein sequence, read N- to C-terminus: Putative ZDHHC-type palmitoyltransferase 2 (446 aa).

2 disordered regions span residues 1–33 (MNLYNNSNSSGSSNSSSSSNNKTNIDYNDINNN) and 56–83 (QIINKNNNNNHNRNNNNNNNNNNNHNNP). Asparagine 5, asparagine 8, asparagine 14, and asparagine 21 each carry an N-linked (GlcNAc...) asparagine glycan. A compositionally biased stretch (low complexity) spans 56–81 (QIINKNNNNNHNRNNNNNNNNNNNHN). 4 N-linked (GlcNAc...) asparagine glycosylation sites follow: asparagine 141, asparagine 145, asparagine 159, and asparagine 165. Transmembrane regions (helical) follow at residues 178 to 198 (IVIFLILVPYIYILNFAIFPW), 210 to 230 (IHSFISMALVIQMLCNYYLCS), 305 to 325 (YFVLFLFYTSISIIYFFTLLI), 349 to 369 (LFLLGILIIILIIAGISIMAL), and 410 to 430 (IISNFSIVFGNLSFLWLLPTI). The DHHC domain occupies 261-311 (KWCNKCNHQKPERAHHCRYCNRCVLRMDHHCQWLQNCIGLFNQKYFVLFLF).

The protein belongs to the DHHC palmitoyltransferase family.

It is found in the membrane. The catalysed reaction is L-cysteinyl-[protein] + hexadecanoyl-CoA = S-hexadecanoyl-L-cysteinyl-[protein] + CoA. The polypeptide is Putative ZDHHC-type palmitoyltransferase 2 (Dictyostelium discoideum (Social amoeba)).